A 242-amino-acid polypeptide reads, in one-letter code: MAAAAGEARRVLVYGGRGALGSRCVQAFRARNWWVASIDVQENEEASANVVVKMTDSFTEQADQVTAEVGKLLGTEKVDAILCVAGGWAGGNAKSKSLFKNCDLMWKQSVWTSTISSHLATKHLKEGGLLTLAGARAALDGTPGMIGYGMAKAAVHQLCQSLAGKSSGLPPGAAAVALLPVTLDTPVNRKSMPEADFSSWTPLEFLVETFHDWITEKNRPSSGSLIQVVTTEGKTELTAASP.

Leucine 12 to alanine 36 serves as a coordination point for NADP(+). N6-succinyllysine is present on residues lysine 71, lysine 77, lysine 94, and lysine 100. Tyrosine 148 (proton acceptor) is an active-site residue.

The protein belongs to the short-chain dehydrogenases/reductases (SDR) family. In terms of assembly, homodimer.

The enzyme catalyses 5,6,7,8-tetrahydropteridine + NAD(+) = 6,7-dihydropteridine + NADH + H(+). It catalyses the reaction 5,6,7,8-tetrahydropteridine + NADP(+) = 6,7-dihydropteridine + NADPH + H(+). Catalyzes the conversion of quinonoid dihydrobiopterin into tetrahydrobiopterin. The sequence is that of Dihydropteridine reductase (QDPR) from Bos taurus (Bovine).